The sequence spans 238 residues: Ribonuclease PH (238 aa).

Residues Arg86 and 124 to 126 each bind phosphate; that span reads GTR.

The protein belongs to the RNase PH family. In terms of assembly, homohexameric ring arranged as a trimer of dimers.

The enzyme catalyses tRNA(n+1) + phosphate = tRNA(n) + a ribonucleoside 5'-diphosphate. In terms of biological role, phosphorolytic 3'-5' exoribonuclease that plays an important role in tRNA 3'-end maturation. Removes nucleotide residues following the 3'-CCA terminus of tRNAs; can also add nucleotides to the ends of RNA molecules by using nucleoside diphosphates as substrates, but this may not be physiologically important. Probably plays a role in initiation of 16S rRNA degradation (leading to ribosome degradation) during starvation. The sequence is that of Ribonuclease PH from Brucella abortus (strain S19).